The primary structure comprises 616 residues: Methylmalonyl-CoA mutase small subunit (616 aa).

This sequence belongs to the methylmalonyl-CoA mutase family. In terms of assembly, heterodimer of an alpha and a beta chain. Requires adenosylcob(III)alamin as cofactor.

It catalyses the reaction (R)-methylmalonyl-CoA = succinyl-CoA. The protein operates within metabolic intermediate metabolism; propanoyl-CoA degradation; succinyl-CoA from propanoyl-CoA: step 3/3. Catalyzes the isomerization of succinyl-CoA to methylmalonyl-CoA during synthesis of propionate from tricarboxylic acid-cycle intermediates. This conversion most likely represents an important source of building blocks for polyketide antibiotic biosynthesis. It is unable to catalyze the conversion of isobutyryl-CoA into N-butyryl-CoA. This chain is Methylmalonyl-CoA mutase small subunit (mutA), found in Streptomyces virginiae (Streptomyces cinnamonensis).